The following is a 570-amino-acid chain: MSDIKKSVIVIGAGVGGVSTAARLAKAGFKVTILEKNDFTGGRCSLIHNDGHRFDQGPSLLLLPRFFHEIFQDLGTSLTAEGVELLKCEPNYNIWFGDGSSFEMSTDLTKMKKAIEAVEGIDGFERYLGFLQESHRHYEVSVESVLRRNFPSILSLARPEVLFNLFNIHPLESIWTRASKYFWTERLRRVFTFGSMYMGMSPFDAPGTYSLLQYTELAEGILYPRGGFHKVVEALVNVGQRLGVEYRLSTGVKSISIDQATGKANGVVLSDGTHLPSDIVISNADLVYTYNNLLPKTSYADSLSKRETSCSSISFYWSASKIVPELNAHNIFLADEYQESFDSIFKEHLIPSEPSFYVNVPSRIDPSAAPEGKDSIVVLVPVGHLLSDSEGTHRGLSKSGNSGGLETSQDWDKMISLARDTVIATMRARIGVDLAPLIENEIINTPFTWQEKFNLDKGAILGLSHSIMNVLAFRPGTQHSKYKNLYFAGASTHPGTGVPVCIAGSKIVAEQILKDSGFKNNQIPWAQDTTKSPKGGLDKMSDSSLTLFQGFLGALVAILLAYYYLVIAAN.

The helical transmembrane segment at 547 to 567 (LFQGFLGALVAILLAYYYLVI) threads the bilayer.

Belongs to the carotenoid/retinoid oxidoreductase family. Requires NAD(+) as cofactor.

It is found in the membrane. The catalysed reaction is 15-cis-phytoene + A = all-trans-phytofluene + AH2. The enzyme catalyses all-trans-phytofluene + A = all-trans-zeta-carotene + AH2. It catalyses the reaction all-trans-zeta-carotene + A = all-trans-neurosporene + AH2. It carries out the reaction all-trans-neurosporene + A = all-trans-lycopene + AH2. The protein operates within carotenoid biosynthesis. Functionally, phytoene desaturase; part of the car gene cluster that mediates the biosynthesis of neurosporaxanthin, a carboxylic apocarotenoid acting as an essential protective pigments and leading to orange pigmentation. Converts phytoene into lycopene via the intermediates phytofluene, zeta-carotene and neurosporene; and further desaturates gamma-carotene into torulene. Neurosporaxanthin is synthesized from geranyl-geranyl pyrophosphate (GGPP) through several enzymatic activities. Phytoene synthase activity performed by the bifunctional enzyme carAR first produces phytoene from geranyl-geranyl pyrophosphate (GGPP). The phytoene dehydrogenase carB then introduces 4 desaturations to lead to lycopene which is substrate of the carotene cyclase activity of carAR that leads to the production of gamma-carotene. CarB then performs a 5th desaturation reaction to yield torulene. Torulene is the substrate of the dioxidase carT that breaks the molecule, removing five carbon atoms to yield beta-apo-4'-carotenal, whereas the aldehyde dehydrogenase carD mediates the last step by converting beta-apo-4'-carotenal into neurosporaxanthin. In Fusarium fujikuroi (Bakanae and foot rot disease fungus), this protein is Phytoene desaturase.